The sequence spans 544 residues: Chaperonin GroEL (544 aa).

Residues T29–P32, D86–T90, G413, N476–A478, and D492 contribute to the ATP site.

It belongs to the chaperonin (HSP60) family. In terms of assembly, forms a cylinder of 14 subunits composed of two heptameric rings stacked back-to-back. Interacts with the co-chaperonin GroES.

The protein resides in the cytoplasm. It carries out the reaction ATP + H2O + a folded polypeptide = ADP + phosphate + an unfolded polypeptide.. Together with its co-chaperonin GroES, plays an essential role in assisting protein folding. The GroEL-GroES system forms a nano-cage that allows encapsulation of the non-native substrate proteins and provides a physical environment optimized to promote and accelerate protein folding. The chain is Chaperonin GroEL from Bacillus pumilus (strain SAFR-032).